A 321-amino-acid chain; its full sequence is tRNA 2-thiolation protein NcsA (321 aa).

Residue Lys204 forms a Glycyl lysine isopeptide (Lys-Gly) (interchain with G-Cter in SAMP2) linkage.

The protein belongs to the TtcA family. CTU1/NCS6/ATPBD3 subfamily. In terms of assembly, interacts with monomeric and polymeric forms of SAMP2. Interacts with UbaA. Interacts with archaeal EF-1-alpha and Pan1. Non-sampylated protein forms a complex with archaeal CPSF1 of approximately 100 kDa. Sampylated at Lys-204 with the archaeal ubiquitin-like protein SAMP2. Polymeric chains of SAMP2 are also linked.

It functions in the pathway tRNA modification; 5-methoxycarbonylmethyl-2-thiouridine-tRNA biosynthesis. Functionally, required for thiolation of mcm(5)S(2)U at the wobble uridine position of tRNA specific for lysine (tRNA(Lys)). Probably acts by catalyzing adenylation of tRNA, an intermediate required for 2-thiolation. May also act as a sulfurtransferase that transfers sulfur from thiocarboxylated SAMP2 onto the uridine of tRNA at wobble position. Required for cell growth at elevated temperatures. The chain is tRNA 2-thiolation protein NcsA from Haloferax volcanii (strain ATCC 29605 / DSM 3757 / JCM 8879 / NBRC 14742 / NCIMB 2012 / VKM B-1768 / DS2) (Halobacterium volcanii).